The following is a 913-amino-acid chain: MGDPDLLEVLAEEGEKVNKHIDYSFQMSEQSLSSRETSFLINEETMPAKRFNLFLRRRLMFQKNQQSKDSIFFRDGIRQIDFVLSYVDDVKKDAELKAERRKEFETNLRKTGLELEIEDKRDSEDGRTYFVKIHAPWEVLVTYAEVLGIKMPIKESDIPRPKHTPISYVLGPVRLPLSVKYPHPEYFTAQFSRHRQELFLIEDQATFFPSSSRNRIVYYILSRCPFGIEDGKKRFGIERLLNSNTYSSAYPLHDGQYWKPSEPPNPTNERYTLHQNWARFSYFYKEQPLDLIKNYYGEKIGIYFVFLGFYTEMLFFAAVVGLACFIYGLLSMEHNTSSTEICDPEIGGQMIMCPLCDQVCDYWRLNSTCLASKFSHLFDNESTVFFAIFMGIWVTLFLEFWKQRQARLEYEWDLVDFEEEQQQLQLRPEFEAMCKHRKLNAVTKEMEPYMPLYTRIPWYFLSGATVTLWMSLVVTSMVAVIVYRLSVFATFASFMESDASLKQVKSFLTPQITTSLTGSCLNFIVILILNFFYEKISAWITKMEIPRTYQEYESSLTLKMFLFQFVNFYSSCFYVAFFKGKFVGYPGKYTYLFNEWRSEECDPGGCLIELTTQLTIIMTGKQIFGNIKEAIYPLALNWWRRRKARTNSEKLYSRWEQDHDLESFGPLGLFYEYLETVTQFGFVTLFVASFPLAPLLALINNIVEIRVDAWKLTTQYRRTVASKAHSIGVWQDILYGMAVLSVATNAFIVAFTSDIIPRLVYYYAYSTNATQPMTGYVNNSLSVFLIADFPNHTAPSEKRDFITCRYRDYRYPPDDENKYFHNMQFWHVLAAKMTFIIVMEHVVFLVKFLLAWMIPDVPKDVVERIKREKLMTIKILHDFELNKLKENLGINSNEFAKHVMIEENKAQLAKSTL.

At 1–299 the chain is on the cytoplasmic side; the sequence is MGDPDLLEVL…DLIKNYYGEK (299 aa). The helical transmembrane segment at 300–320 threads the bilayer; sequence IGIYFVFLGFYTEMLFFAAVV. At 321 to 380 the chain is on the extracellular side; the sequence is GLACFIYGLLSMEHNTSSTEICDPEIGGQMIMCPLCDQVCDYWRLNSTCLASKFSHLFDN. Asn335, Asn366, and Asn380 each carry an N-linked (GlcNAc...) asparagine glycan. A helical transmembrane segment spans residues 381–401; sequence ESTVFFAIFMGIWVTLFLEFW. Residues 402–462 are Cytoplasmic-facing; the sequence is KQRQARLEYE…YTRIPWYFLS (61 aa). A helical transmembrane segment spans residues 463-483; it reads GATVTLWMSLVVTSMVAVIVY. Residues 484–511 are Extracellular-facing; that stretch reads RLSVFATFASFMESDASLKQVKSFLTPQ. The chain crosses the membrane as a helical span at residues 512 to 532; sequence ITTSLTGSCLNFIVILILNFF. Over 533 to 557 the chain is Cytoplasmic; that stretch reads YEKISAWITKMEIPRTYQEYESSLT. Residues 558–578 traverse the membrane as a helical segment; the sequence is LKMFLFQFVNFYSSCFYVAFF. Residues 579-679 are Extracellular-facing; the sequence is KGKFVGYPGK…FYEYLETVTQ (101 aa). A helical membrane pass occupies residues 680–700; sequence FGFVTLFVASFPLAPLLALIN. Residues 701-732 lie on the Cytoplasmic side of the membrane; the sequence is NIVEIRVDAWKLTTQYRRTVASKAHSIGVWQD. Residues 733 to 753 traverse the membrane as a helical segment; sequence ILYGMAVLSVATNAFIVAFTS. The Extracellular segment spans residues 754 to 834; the sequence is DIIPRLVYYY…FWHVLAAKMT (81 aa). N-linked (GlcNAc...) asparagine glycosylation is found at Asn768, Asn778, and Asn791. The chain crosses the membrane as a helical span at residues 835–855; sequence FIIVMEHVVFLVKFLLAWMIP. Residues 856–913 lie on the Cytoplasmic side of the membrane; it reads DVPKDVVERIKREKLMTIKILHDFELNKLKENLGINSNEFAKHVMIEENKAQLAKSTL.

Belongs to the anoctamin family. Highly expressed in brain, heart, kidney, lung, and skeletal muscle. Weakly expressed in bone marrow, fetal liver, placenta, spleen, thymus, osteoblasts and periodontal ligament cells.

The protein localises to the endoplasmic reticulum membrane. The protein resides in the cell membrane. Functionally, plays a role in plasma membrane repair in a process involving annexins. Does not exhibit calcium-activated chloride channel (CaCC) activity. The chain is Anoctamin-5 (ANO5) from Homo sapiens (Human).